The primary structure comprises 181 residues: MDPRTLSALKDAIRSIPDYPKPGIVFRDITTLLGDPGAFRRAVDALVHPFAGGRIDQVAGIEARGFILGGAVAHQLSSGFVPIRKKGKLPHTTVSIAYALEYGTDEMEIHSDAVKPGDRVVLVDDLIATGGTAKAAVDLLRQIGAEVVAACFVIDLPELGGAAKLRALDVPVWTLVEFEGH.

It belongs to the purine/pyrimidine phosphoribosyltransferase family. Homodimer.

The protein localises to the cytoplasm. It catalyses the reaction AMP + diphosphate = 5-phospho-alpha-D-ribose 1-diphosphate + adenine. The protein operates within purine metabolism; AMP biosynthesis via salvage pathway; AMP from adenine: step 1/1. Catalyzes a salvage reaction resulting in the formation of AMP, that is energically less costly than de novo synthesis. This is Adenine phosphoribosyltransferase from Methylobacterium nodulans (strain LMG 21967 / CNCM I-2342 / ORS 2060).